A 345-amino-acid polypeptide reads, in one-letter code: S-adenosylmethionine:tRNA ribosyltransferase-isomerase (345 aa).

It belongs to the QueA family. As to quaternary structure, monomer.

It is found in the cytoplasm. The enzyme catalyses 7-aminomethyl-7-carbaguanosine(34) in tRNA + S-adenosyl-L-methionine = epoxyqueuosine(34) in tRNA + adenine + L-methionine + 2 H(+). The protein operates within tRNA modification; tRNA-queuosine biosynthesis. Functionally, transfers and isomerizes the ribose moiety from AdoMet to the 7-aminomethyl group of 7-deazaguanine (preQ1-tRNA) to give epoxyqueuosine (oQ-tRNA). This chain is S-adenosylmethionine:tRNA ribosyltransferase-isomerase, found in Thermodesulfovibrio yellowstonii (strain ATCC 51303 / DSM 11347 / YP87).